Consider the following 359-residue polypeptide: Protein HEXIM1 (359 aa).

Residues 1-163 (MAEPFLSEYQ…RRRPSKKKRH (163 aa)) are disordered. Residues 9 to 19 (YQHQPQTSNCT) show a composition bias toward polar residues. Composition is skewed to basic and acidic residues over residues 34–47 (PGAE…DSRW) and 84–93 (CLREGEKGQN). Residues S97 and S98 each carry the phosphoserine modification. The span at 148 to 163 (LGKKKHRRRPSKKKRH) shows a compositional bias: basic residues. A basic region; mediates nuclear localization and interaction with 7SK snRNA and NR3C1 region spans residues 150-177 (KKKHRRRPSKKKRHWKPYYKLTWEEKKK). The segment at 202-205 (PYNT) is interaction with P-TEFb. Positions 210–250 (MDDHDQEEPDLKTGLYSKRAAAKSDDTSDDDFMEEGGEEDG) are autoinhibitory acidic region; in absence of 7SK snRNA interacts with the basic region preventing interaction with P-TEFb and modulating subcellular localization. Residues 213-262 (HDQEEPDLKTGLYSKRAAAKSDDTSDDDFMEEGGEEDGGSDGMGGDGSEF) are disordered. Position 233 is a phosphoserine (S233). A Phosphothreonine modification is found at T236. Over residues 236 to 251 (TSDDDFMEEGGEEDGG) the composition is skewed to acidic residues. 3 positions are modified to phosphoserine: S237, S252, and S260. The stretch at 283–349 (SKQELIKEYL…LTENELHRQQ (67 aa)) forms a coiled coil. Residues 286-314 (ELIKEYLELEKCLSRMEDENNRLRLESKR) form a mediates interaction with CCNT1 region. The tract at residues 310–355 (LESKRLGGDDARVRELELELDRLRAENLQLLTENELHRQQERAPLS) is required for inhibition of ESR1-dependent transcription.

This sequence belongs to the HEXIM family. Homooligomer and heterooligomer with HEXIM2; probably dimeric. Core component of the 7SK RNP complex, at least composed of 7SK RNA, LARP7, MEPCE, HEXIM1 (or HEXIM2) and P-TEFb (composed of CDK9 and CCNT1/cyclin-T1). Interacts with the N-CoR complex through NCOR1. Interacts with ESR1 and NR3C1. May interact with NF-kappa-B through RELA. Interacts with CCNT2; mediates formation of a tripartite complex with KPNA2. Part of the HDP-RNP complex composed of at least HEXIM1, PRKDC, XRCC5, XRCC6, paraspeckle proteins (SFPQ, NONO, PSPC1, RBM14, and MATR3) and NEAT1 non-coding RNA. Ubiquitously expressed with higher expression in placenta. HEXIM1 and HEXIM2 are differentially expressed. Expressed in endocrine tissues.

It is found in the nucleus. It localises to the cytoplasm. Transcriptional regulator which functions as a general RNA polymerase II transcription inhibitor. Core component of the 7SK RNP complex: in cooperation with 7SK snRNA sequesters P-TEFb in a large inactive 7SK snRNP complex preventing RNA polymerase II phosphorylation and subsequent transcriptional elongation. May also regulate NF-kappa-B, ESR1, NR3C1 and CIITA-dependent transcriptional activity. Plays a role in the regulation of DNA virus-mediated innate immune response by assembling into the HDP-RNP complex, a complex that serves as a platform for IRF3 phosphorylation and subsequent innate immune response activation through the cGAS-STING pathway. The polypeptide is Protein HEXIM1 (HEXIM1) (Homo sapiens (Human)).